Consider the following 894-residue polypeptide: Exocyst complex component 2 (894 aa).

The region spanning 5-89 (PVVTGLSPKE…GTSTVQFRAY (85 aa)) is the IPT/TIG domain. Basic and acidic residues predominate over residues 398–413 (HTSKDSGAQEKAKNRD). The interval 398 to 417 (HTSKDSGAQEKAKNRDSSQA) is disordered.

Belongs to the SEC5 family. In terms of assembly, the exocyst complex is composed of Sec3/Exoc1, Sec5/Exoc2, Sec6/Exoc3, Sec8/Exoc4, Sec10/Exoc5, Sec15/Exoc6, Exo70/Exoc7 and Exo84/Exoc8.

Functionally, component of the exocyst complex involved in the docking of exocytic vesicles with fusion sites on the plasma membrane. The protein is Exocyst complex component 2 of Drosophila melanogaster (Fruit fly).